The chain runs to 353 residues: Soluble interferon alpha/beta receptor OPG204 (353 aa).

The first 21 residues, 1–21 (MTMKMMVHIYFVSLSLLLLLF), serve as a signal peptide directing secretion. Ig-like C2-type domains are found at residues 67-139 (LGEP…KNGD) and 157-239 (PKTY…IVVS). Disulfide bonds link Cys-75/Cys-131 and Cys-174/Cys-223. N-linked (GlcNAc...) asparagine; by host glycans are attached at residues Asn-119, Asn-184, Asn-263, Asn-271, and Asn-323. An Ig-like V-type domain is found at 248 to 347 (PSQDHRFKLI…HNYYFEKTLT (100 aa)). Residues Cys-274 and Cys-335 are joined by a disulfide bond.

Belongs to the interleukin-1 receptor family. Interacts with host IFNA1.

The protein resides in the secreted. Functionally, counteracts the antiviral effects of host IFN-alpha/beta and key IFN-inducible proteins involved in viral RNA degradation suxh as host OAS1. Acts as a soluble IFN-alpha receptor and thus inhibits the interaction between host IFN-alpha and its receptor. In Homo sapiens (Human), this protein is Soluble interferon alpha/beta receptor OPG204 (OPG204).